A 220-amino-acid chain; its full sequence is NAD(P)H-hydrate epimerase (220 aa).

The 198-residue stretch at 6–203 (ARHLTTLATG…SFDLPEALFH (198 aa)) folds into the YjeF N-terminal domain. 53–57 (HNGGV) serves as a coordination point for (6S)-NADPHX. K(+) is bound by residues asparagine 54 and aspartate 116. Residues 120–126 (GMRLEGP) and aspartate 149 each bind (6S)-NADPHX. A K(+)-binding site is contributed by threonine 152.

This sequence belongs to the NnrE/AIBP family. K(+) is required as a cofactor.

The catalysed reaction is (6R)-NADHX = (6S)-NADHX. The enzyme catalyses (6R)-NADPHX = (6S)-NADPHX. Its function is as follows. Catalyzes the epimerization of the S- and R-forms of NAD(P)HX, a damaged form of NAD(P)H that is a result of enzymatic or heat-dependent hydration. This is a prerequisite for the S-specific NAD(P)H-hydrate dehydratase to allow the repair of both epimers of NAD(P)HX. This is NAD(P)H-hydrate epimerase from Truepera radiovictrix (strain DSM 17093 / CIP 108686 / LMG 22925 / RQ-24).